Here is a 206-residue protein sequence, read N- to C-terminus: Imidazoleglycerol-phosphate dehydratase (206 aa).

Belongs to the imidazoleglycerol-phosphate dehydratase family.

The protein resides in the cytoplasm. It catalyses the reaction D-erythro-1-(imidazol-4-yl)glycerol 3-phosphate = 3-(imidazol-4-yl)-2-oxopropyl phosphate + H2O. It functions in the pathway amino-acid biosynthesis; L-histidine biosynthesis; L-histidine from 5-phospho-alpha-D-ribose 1-diphosphate: step 6/9. The protein is Imidazoleglycerol-phosphate dehydratase of Cutibacterium acnes (strain DSM 16379 / KPA171202) (Propionibacterium acnes).